We begin with the raw amino-acid sequence, 462 residues long: Argininosuccinate lyase (462 aa).

Belongs to the lyase 1 family. Argininosuccinate lyase subfamily.

The protein localises to the cytoplasm. It catalyses the reaction 2-(N(omega)-L-arginino)succinate = fumarate + L-arginine. The protein operates within amino-acid biosynthesis; L-arginine biosynthesis; L-arginine from L-ornithine and carbamoyl phosphate: step 3/3. The protein is Argininosuccinate lyase of Bacillus cereus (strain AH820).